Reading from the N-terminus, the 170-residue chain is MDLKQYVTTVENWPKEGITFRDITTIMDHGPAYKYATDQIVEYAKELGAEIVVGPEARGFIIGCPVAYALEIGFAPVRKPGKLPRKVISADYGLEYGKDTLTMHNDAIKPGQKVLICDDLLATGGTVEATVRLVEQLGGQVVGCAFLIELLELNGREKLGDLNIKTLIQY.

This sequence belongs to the purine/pyrimidine phosphoribosyltransferase family. As to quaternary structure, homodimer.

The protein resides in the cytoplasm. It catalyses the reaction AMP + diphosphate = 5-phospho-alpha-D-ribose 1-diphosphate + adenine. The protein operates within purine metabolism; AMP biosynthesis via salvage pathway; AMP from adenine: step 1/1. Catalyzes a salvage reaction resulting in the formation of AMP, that is energically less costly than de novo synthesis. The chain is Adenine phosphoribosyltransferase from Lysinibacillus sphaericus (strain C3-41).